The primary structure comprises 256 residues: Probable fructose-2,6-bisphosphatase TIGAR A (256 aa).

H11 serves as the catalytic Tele-phosphohistidine intermediate. Residue E89 is the Proton donor/acceptor of the active site. A disordered region spans residues 147–170 (HQDKVQDGGTSSADESTEAPAGLA).

It belongs to the phosphoglycerate mutase family.

The protein resides in the cytoplasm. It localises to the nucleus. Its subcellular location is the mitochondrion. The catalysed reaction is beta-D-fructose 2,6-bisphosphate + H2O = beta-D-fructose 6-phosphate + phosphate. Functionally, fructose-bisphosphatase hydrolyzing fructose-2,6-bisphosphate as well as fructose-1,6-bisphosphate. Acts as a negative regulator of glycolysis by lowering intracellular levels of fructose-2,6-bisphosphate in a p53/TP53-dependent manner, resulting in the pentose phosphate pathway (PPP) activation and NADPH production. Contributes to the generation of reduced glutathione to cause a decrease in intracellular reactive oxygen species (ROS) content, correlating with its ability to protect cells from oxidative or metabolic stress-induced cell death. May play a role in mitophagy inhibition. In Danio rerio (Zebrafish), this protein is Probable fructose-2,6-bisphosphatase TIGAR A.